The primary structure comprises 356 residues: tRNA-specific 2-thiouridylase MnmA (356 aa).

Residues 6-13 and Leu32 each bind ATP; that span reads AMSGGVDS. Cys101 (nucleophile) is an active-site residue. Cys101 and Cys193 are disulfide-bonded. Gly125 serves as a coordination point for ATP. An interaction with tRNA region spans residues 143–145; sequence KDQ. Cys193 (cysteine persulfide intermediate) is an active-site residue.

It belongs to the MnmA/TRMU family.

It is found in the cytoplasm. The enzyme catalyses S-sulfanyl-L-cysteinyl-[protein] + uridine(34) in tRNA + AH2 + ATP = 2-thiouridine(34) in tRNA + L-cysteinyl-[protein] + A + AMP + diphosphate + H(+). In terms of biological role, catalyzes the 2-thiolation of uridine at the wobble position (U34) of tRNA, leading to the formation of s(2)U34. This is tRNA-specific 2-thiouridylase MnmA from Mycobacteroides abscessus (strain ATCC 19977 / DSM 44196 / CCUG 20993 / CIP 104536 / JCM 13569 / NCTC 13031 / TMC 1543 / L948) (Mycobacterium abscessus).